We begin with the raw amino-acid sequence, 316 residues long: Coiled-coil domain-containing protein 42 (316 aa).

Coiled coils occupy residues 43–151 (RLLE…EYSI) and 182–236 (HHDL…SDVI).

The protein belongs to the CFAP73 family. In terms of assembly, interacts with ODF1 and ODF2. Interacts with CCDC38. Interacts with CCDC146. Interacts with CFAP53.

The protein localises to the cytoplasm. The protein resides in the perinuclear region. It localises to the cytoskeleton. It is found in the cell projection. Its subcellular location is the cilium. The protein localises to the flagellum. The protein resides in the microtubule organizing center. It localises to the centrosome. In terms of biological role, essential for male fertility. Required for sperm development. The chain is Coiled-coil domain-containing protein 42 from Bos taurus (Bovine).